A 171-amino-acid polypeptide reads, in one-letter code: Secreted protein CSS3 (171 aa).

Residues 1 to 20 (MVPLFGLFCIFSQLYSLCSA) form the signal peptide. 3 N-linked (GlcNAc...) asparagine glycosylation sites follow: Asn-37, Asn-139, and Asn-159.

It is found in the cytoplasm. Its subcellular location is the secreted. This chain is Secreted protein CSS3, found in Saccharomyces cerevisiae (strain ATCC 204508 / S288c) (Baker's yeast).